A 363-amino-acid chain; its full sequence is Fructose-bisphosphate aldolase 2 (363 aa).

A D-glyceraldehyde 3-phosphate-binding site is contributed by Ser-61. The active-site Proton donor is the Asp-109. Residues His-110, Asp-144, Glu-174, and His-226 each coordinate Zn(2+). Gly-227 lines the dihydroxyacetone phosphate pocket. A Zn(2+)-binding site is contributed by His-264. Residue 265–267 coordinates dihydroxyacetone phosphate; sequence GGS.

The protein belongs to the class II fructose-bisphosphate aldolase family. Homodimer. Requires Zn(2+) as cofactor.

It carries out the reaction beta-D-fructose 1,6-bisphosphate = D-glyceraldehyde 3-phosphate + dihydroxyacetone phosphate. The protein operates within carbohydrate degradation; glycolysis; D-glyceraldehyde 3-phosphate and glycerone phosphate from D-glucose: step 4/4. In terms of biological role, catalyzes the aldol condensation of dihydroxyacetone phosphate (DHAP or glycerone-phosphate) with glyceraldehyde 3-phosphate (G3P) to form fructose 1,6-bisphosphate (FBP) in gluconeogenesis and the reverse reaction in glycolysis. The chain is Fructose-bisphosphate aldolase 2 (FBA2) from Paracoccidioides lutzii (strain ATCC MYA-826 / Pb01) (Paracoccidioides brasiliensis).